Here is a 272-residue protein sequence, read N- to C-terminus: MPLGLKPTCSVCKTTSSSMWKKGPQGEILCHHCTGRGGAGGGGSCPGAAGGTGGGGGGTGGGFGAATFASTSAAPPQSNGGGGGKQSKQEIHRRSARLRNTKYKSAPAAEKKVSTKGKGRRHIFKLKNPIKAPESVSTIITAESIFYKGVYYQIGDVVSVIDEQDGKPYYAQIRGFVQDQYCEKSAALTWLIPTLASPRDQFDPASYIVGPEEDLPRKMEYLEFVCHAPSEYFKSRSSPFPTVPTRPEKGYIWTHVGPTPAITIKETVANHL.

A GATA-type zinc finger spans residues 9-33 (CSVCKTTSSSMWKKGPQGEILCHHC). The tract at residues 67–120 (TFASTSAAPPQSNGGGGGKQSKQEIHRRSARLRNTKYKSAPAAEKKVSTKGKGR) is disordered. Position 167 is an N6-acetyllysine (Lys167). Residue Lys265 forms a Glycyl lysine isopeptide (Lys-Gly) (interchain with G-Cter in SUMO2) linkage.

Its subcellular location is the nucleus. This is GATA zinc finger domain-containing protein 1 (GATAD1) from Bos taurus (Bovine).